Consider the following 560-residue polypeptide: S100P-binding protein (560 aa).

2 disordered regions span residues 259–292 (SDIP…ESTP) and 313–400 (SSSS…GKSF). Over residues 313–352 (SSSSLQLPETSLASSTEPSPSLQLSASSVTAMNGQNNSNK) the composition is skewed to polar residues. A compositionally biased stretch (basic and acidic residues) spans 378–387 (QKVEPKKNKP).

It is found in the nucleus. The polypeptide is S100P-binding protein (s100pbp) (Xenopus laevis (African clawed frog)).